Reading from the N-terminus, the 313-residue chain is D-alanine--D-alanine ligase (313 aa).

One can recognise an ATP-grasp domain in the interval 107-303; it reads KQAFAAAGLT…FEALVEQIAC (197 aa). 135-188 contacts ATP; it reads PFGLPVVVKPVQEGSSVGVTIVKKPEDLQAALDEAFRYDTLVLVEKYIKGQEVQ. Mg(2+)-binding residues include D256, E269, and N271.

This sequence belongs to the D-alanine--D-alanine ligase family. Mg(2+) serves as cofactor. It depends on Mn(2+) as a cofactor.

The protein localises to the cytoplasm. The catalysed reaction is 2 D-alanine + ATP = D-alanyl-D-alanine + ADP + phosphate + H(+). Its pathway is cell wall biogenesis; peptidoglycan biosynthesis. Functionally, cell wall formation. The protein is D-alanine--D-alanine ligase of Trichlorobacter lovleyi (strain ATCC BAA-1151 / DSM 17278 / SZ) (Geobacter lovleyi).